The following is a 295-amino-acid chain: Acetylglutamate kinase (295 aa).

Substrate is bound by residues Gly61 to Gly62, Arg83, and Asn182.

The protein belongs to the acetylglutamate kinase family. ArgB subfamily.

It localises to the cytoplasm. It carries out the reaction N-acetyl-L-glutamate + ATP = N-acetyl-L-glutamyl 5-phosphate + ADP. It participates in amino-acid biosynthesis; L-arginine biosynthesis; N(2)-acetyl-L-ornithine from L-glutamate: step 2/4. Its function is as follows. Catalyzes the ATP-dependent phosphorylation of N-acetyl-L-glutamate. The chain is Acetylglutamate kinase from Clostridium acetobutylicum (strain ATCC 824 / DSM 792 / JCM 1419 / IAM 19013 / LMG 5710 / NBRC 13948 / NRRL B-527 / VKM B-1787 / 2291 / W).